A 196-amino-acid polypeptide reads, in one-letter code: Holliday junction branch migration complex subunit RuvA (196 aa).

The tract at residues 1-63 (MIEYIKGEIV…EDAHLLFGFA (63 aa)) is domain I. The interval 64–142 (EKIERELFLL…PMESMAGNLP (79 aa)) is domain II. The flexible linker stretch occupies residues 142 to 146 (PEASV). A domain III region spans residues 147–196 (SNGAVTEEAVAALVMLGFQKAASQKAVSAILKGSPTLAVEQVIKTALRML).

It belongs to the RuvA family. As to quaternary structure, homotetramer. Forms an RuvA(8)-RuvB(12)-Holliday junction (HJ) complex. HJ DNA is sandwiched between 2 RuvA tetramers; dsDNA enters through RuvA and exits via RuvB. An RuvB hexamer assembles on each DNA strand where it exits the tetramer. Each RuvB hexamer is contacted by two RuvA subunits (via domain III) on 2 adjacent RuvB subunits; this complex drives branch migration. In the full resolvosome a probable DNA-RuvA(4)-RuvB(12)-RuvC(2) complex forms which resolves the HJ.

Its subcellular location is the cytoplasm. The RuvA-RuvB-RuvC complex processes Holliday junction (HJ) DNA during genetic recombination and DNA repair, while the RuvA-RuvB complex plays an important role in the rescue of blocked DNA replication forks via replication fork reversal (RFR). RuvA specifically binds to HJ cruciform DNA, conferring on it an open structure. The RuvB hexamer acts as an ATP-dependent pump, pulling dsDNA into and through the RuvAB complex. HJ branch migration allows RuvC to scan DNA until it finds its consensus sequence, where it cleaves and resolves the cruciform DNA. This Parabacteroides distasonis (strain ATCC 8503 / DSM 20701 / CIP 104284 / JCM 5825 / NCTC 11152) protein is Holliday junction branch migration complex subunit RuvA.